Consider the following 230-residue polypeptide: Orotidine 5'-phosphate decarboxylase (230 aa).

Substrate is bound by residues aspartate 11, lysine 34, 61-70, threonine 117, arginine 179, glutamine 188, glycine 208, and arginine 209; that span reads DLKLHDIPNT. Lysine 63 (proton donor) is an active-site residue.

The protein belongs to the OMP decarboxylase family. Type 1 subfamily. As to quaternary structure, homodimer.

It catalyses the reaction orotidine 5'-phosphate + H(+) = UMP + CO2. It functions in the pathway pyrimidine metabolism; UMP biosynthesis via de novo pathway; UMP from orotate: step 2/2. Catalyzes the decarboxylation of orotidine 5'-monophosphate (OMP) to uridine 5'-monophosphate (UMP). The protein is Orotidine 5'-phosphate decarboxylase of Streptococcus equi subsp. zooepidemicus (strain H70).